The sequence spans 132 residues: MVEFKIILSDTRTGHSYKMDVSGGAAGALIGKRVGTEIDAAPLGLNGYKILITGASDRNGTPSRRDLPGSGRRGLLLAGGVGFNPKEDGQRARKSIRGNEITADFVQINAKVATYGEKSLDELLAAPAAAAE.

It belongs to the eukaryotic ribosomal protein eS6 family.

In Methanosphaerula palustris (strain ATCC BAA-1556 / DSM 19958 / E1-9c), this protein is Small ribosomal subunit protein eS6.